We begin with the raw amino-acid sequence, 599 residues long: Elongation factor 4 (599 aa).

In terms of domain architecture, tr-type G spans Ser-5 to Thr-187. Residues Asp-17–Thr-22 and Asn-134–Asp-137 each bind GTP.

This sequence belongs to the TRAFAC class translation factor GTPase superfamily. Classic translation factor GTPase family. LepA subfamily.

The protein resides in the cell inner membrane. It carries out the reaction GTP + H2O = GDP + phosphate + H(+). Required for accurate and efficient protein synthesis under certain stress conditions. May act as a fidelity factor of the translation reaction, by catalyzing a one-codon backward translocation of tRNAs on improperly translocated ribosomes. Back-translocation proceeds from a post-translocation (POST) complex to a pre-translocation (PRE) complex, thus giving elongation factor G a second chance to translocate the tRNAs correctly. Binds to ribosomes in a GTP-dependent manner. In Ruegeria sp. (strain TM1040) (Silicibacter sp.), this protein is Elongation factor 4.